Consider the following 377-residue polypeptide: Ribosomal RNA large subunit methyltransferase G (377 aa).

It belongs to the methyltransferase superfamily. RlmG family.

It is found in the cytoplasm. The enzyme catalyses guanosine(1835) in 23S rRNA + S-adenosyl-L-methionine = N(2)-methylguanosine(1835) in 23S rRNA + S-adenosyl-L-homocysteine + H(+). Specifically methylates the guanine in position 1835 (m2G1835) of 23S rRNA. The polypeptide is Ribosomal RNA large subunit methyltransferase G (Streptomyces coelicolor (strain ATCC BAA-471 / A3(2) / M145)).